The primary structure comprises 521 residues: Transcription activator of gluconeogenesis SS1G_02293 (521 aa).

The span at 1–12 (MSGETEIDDPEV) shows a compositional bias: acidic residues. The segment at 1–75 (MSGETEIDDP…KFDPKDPLRP (75 aa)) is disordered. Basic and acidic residues-rich tracts occupy residues 21–49 (YSDH…RPDG) and 65–74 (PKFDPKDPLR). The zn(2)-C6 fungal-type DNA-binding region spans 84–112 (CFACQRAHLTCGDERPCQRCIKRGLADAC). Disordered stretches follow at residues 273 to 308 (SGSA…NPPF), 322 to 358 (VAPP…RDPS), and 478 to 501 (NTGN…PRMR). The span at 275 to 287 (SAETPPQDSSAGM) shows a compositional bias: polar residues. 3 stretches are compositionally biased toward low complexity: residues 297 to 308 (NNNPAFNNNPPF), 337 to 351 (KSGP…SALG), and 480 to 494 (GNSG…GRGS). The region spanning 426–497 (TLFEYEDFML…GSSGRGSFTT (72 aa)) is the PAS domain.

The protein belongs to the ERT1/acuK family.

The protein localises to the nucleus. Transcription factor which regulates nonfermentable carbon utilization. Activator of gluconeogenetic genes. In Sclerotinia sclerotiorum (strain ATCC 18683 / 1980 / Ss-1) (White mold), this protein is Transcription activator of gluconeogenesis SS1G_02293.